The following is an 83-amino-acid chain: Large ribosomal subunit protein eL43 (83 aa).

4 residues coordinate Zn(2+): Cys38, Cys41, Cys56, and Cys59. The segment at 38–59 adopts a C4-type zinc-finger fold; it reads CKKCGKKAVKRSGTGIWECRHC.

The protein belongs to the eukaryotic ribosomal protein eL43 family. Putative zinc-binding subfamily. As to quaternary structure, part of the 50S ribosomal subunit. The cofactor is Zn(2+).

Functionally, binds to the 23S rRNA. This Archaeoglobus fulgidus (strain ATCC 49558 / DSM 4304 / JCM 9628 / NBRC 100126 / VC-16) protein is Large ribosomal subunit protein eL43.